The sequence spans 377 residues: Glutamate 5-kinase (377 aa).

Position 18 (Lys-18) interacts with ATP. Substrate is bound by residues Ser-59, Asp-146, and Asn-158. Residues 178–179 (SD) and 222–228 (TGGMATK) contribute to the ATP site. The region spanning 286–363 (QGWVTVDAGA…DAIEAELGFT (78 aa)) is the PUA domain.

The protein belongs to the glutamate 5-kinase family.

Its subcellular location is the cytoplasm. It carries out the reaction L-glutamate + ATP = L-glutamyl 5-phosphate + ADP. Its pathway is amino-acid biosynthesis; L-proline biosynthesis; L-glutamate 5-semialdehyde from L-glutamate: step 1/2. Functionally, catalyzes the transfer of a phosphate group to glutamate to form L-glutamate 5-phosphate. The protein is Glutamate 5-kinase of Caulobacter vibrioides (strain ATCC 19089 / CIP 103742 / CB 15) (Caulobacter crescentus).